An 88-amino-acid chain; its full sequence is LYR motif-containing protein 2 (88 aa).

The N-terminal 19 residues, 1-19, are a transit peptide targeting the mitochondrion; that stretch reads MAASRLPPATLTLKQFMRR.

Belongs to the complex I LYR family.

The protein localises to the mitochondrion. Functionally, involved in efficient integration of the N-module into mitochondrial respiratory chain complex I. This chain is LYR motif-containing protein 2 (Lyrm2), found in Rattus norvegicus (Rat).